The following is a 587-amino-acid chain: Putative adhesin (587 aa).

The signal sequence occupies residues 1–19 (MKFAISTLLIILQAAAVFA). A disulfide bond links cysteine 211 and cysteine 261. Asparagine 239 carries N-linked (GlcNAc...) asparagine glycosylation. 4 repeat units span residues 432-455 (IVTVITKEGGDKYTKTYEEVTYTK), 466-489 (IVTVKTKEGGEKVTKTYEEVTYTK), 491-512 (PEIVTVVTKEGGEKVTTTYHDV), and 513-531 (PEVVTVITKEGGEKVTTTY). Residues 432–531 (IVTVITKEGG…EGGEKVTTTY (100 aa)) form a 4 X 24 AA approximate tandem repeats, Thr-rich region. Serine 562 carries GPI-anchor amidated serine lipidation. Positions 563-587 (EAQVNLGSKSAVGLLAIVPMLFLAI) are cleaved as a propeptide — removed in mature form.

Post-translationally, the GPI-anchor is attached to the protein in the endoplasmic reticulum and serves to target the protein to the cell surface. There, the glucosamine-inositol phospholipid moiety is cleaved off and the GPI-modified mannoprotein is covalently attached via its lipidless GPI glycan remnant to the 1,6-beta-glucan of the outer cell wall layer.

The protein resides in the cell membrane. It is found in the secreted. The protein localises to the cell wall. In terms of biological role, putative adhesion protein. May be involved in cell-cell interaction, interacting with other proteins by salt bridges and hydrogen bonds. This chain is Putative adhesin, found in Komagataella phaffii (strain ATCC 76273 / CBS 7435 / CECT 11047 / NRRL Y-11430 / Wegner 21-1) (Yeast).